The sequence spans 137 residues: Glycine cleavage system H protein (137 aa).

The Lipoyl-binding domain maps to proline 36–glutamate 118. N6-lipoyllysine is present on lysine 77.

It belongs to the GcvH family. The glycine cleavage system is composed of four proteins: P, T, L and H. It depends on (R)-lipoate as a cofactor.

Its function is as follows. The glycine cleavage system catalyzes the degradation of glycine. The H protein shuttles the methylamine group of glycine from the P protein to the T protein. This chain is Glycine cleavage system H protein, found in Bifidobacterium longum (strain NCC 2705).